A 149-amino-acid chain; its full sequence is Large ribosomal subunit protein bL9 (149 aa).

The protein belongs to the bacterial ribosomal protein bL9 family.

In terms of biological role, binds to the 23S rRNA. The protein is Large ribosomal subunit protein bL9 of Haemophilus ducreyi (strain 35000HP / ATCC 700724).